The primary structure comprises 217 residues: Cytidylate kinase (217 aa).

Residue 10-18 (GPAGAGKST) coordinates ATP.

It belongs to the cytidylate kinase family. Type 1 subfamily.

The protein localises to the cytoplasm. The enzyme catalyses CMP + ATP = CDP + ADP. It catalyses the reaction dCMP + ATP = dCDP + ADP. This Clostridium botulinum (strain Okra / Type B1) protein is Cytidylate kinase.